The following is an 853-amino-acid chain: Trimethylguanosine synthase (853 aa).

Residues 53 to 80 (NNSGDQATEEEEGGYSCGTAESHDSKGI) are disordered. Ser55 is subject to Phosphoserine. The residue at position 60 (Thr60) is a Phosphothreonine. Phosphoserine is present on residues Ser85, Ser89, Ser96, and Ser141. Tyr146 is modified (phosphotyrosine). The segment at 149–187 (DDILASDDPSSIEQYENTRTYELQSKKDTETENPPVENT) is disordered. Position 154 is a phosphoserine (Ser154). The span at 156–171 (DPSSIEQYENTRTYEL) shows a compositional bias: polar residues. Ser189 is modified (phosphoserine). 2 disordered regions span residues 334–461 (SQLD…GGIP) and 527–632 (DEEA…KKVN). The span at 367–382 (NGGTNEESNSSGNTNT) shows a compositional bias: low complexity. Ser412, Ser438, and Ser578 each carry phosphoserine. The span at 431 to 442 (DIDENPASDFDD) shows a compositional bias: acidic residues. Polar residues predominate over residues 564 to 578 (ETNNPEPEKCQSVSS). Basic and acidic residues predominate over residues 608 to 619 (PDSRQAETEAEV). The span at 620–630 (KKKKNKKKNKK) shows a compositional bias: basic residues. The tract at residues 631 to 846 (VNGLPPEIAA…TITAYFGDLI (216 aa)) is sufficient for catalytic activity. Asp719 lines the S-adenosyl-L-methionine pocket. Trp766 contacts N(7)-methylguanosine.

It belongs to the methyltransferase superfamily. Trimethylguanosine synthase family. As to quaternary structure, may form homooligomers. Interacts with CREBBP/CBP, EED/WAIT1, EP300/P300, NCOA6/PRIP, PPARBP/PBP and SMN. Ubiquitously expressed. High expression in heart, skeletal muscle, kidney, liver and placenta.

It is found in the cytoplasm. The protein resides in the nucleus. Its subcellular location is the cajal body. It localises to the nucleolus. It carries out the reaction a 5'-end (N(7)-methyl 5'-triphosphoguanosine)-ribonucleoside in snRNA + S-adenosyl-L-methionine = a 5'-end (N(2),N(7)-dimethyl 5'-triphosphoguanosine)-ribonucleoside in snRNA + S-adenosyl-L-homocysteine + H(+). The enzyme catalyses a 5'-end (N(7)-methyl 5'-triphosphoguanosine)-ribonucleoside in snoRNA + S-adenosyl-L-methionine = a 5'-end (N(2),N(7)-dimethyl 5'-triphosphoguanosine)-ribonucleoside in snoRNA + S-adenosyl-L-homocysteine + H(+). It catalyses the reaction a 5'-end (N(2),N(7)-dimethyl 5'-triphosphoguanosine)-ribonucleoside in snRNA + S-adenosyl-L-methionine = a 5'-end (N(2),N(2),N(7)-trimethyl 5'-triphosphoguanosine)-ribonucleoside in snRNA + S-adenosyl-L-homocysteine + H(+). The catalysed reaction is a 5'-end (N(2),N(7)-dimethyl 5'-triphosphoguanosine)-ribonucleoside in snoRNA + S-adenosyl-L-methionine = a 5'-end (N(2),N(2),N(7)-trimethyl 5'-triphosphoguanosine)-ribonucleoside in snoRNA + S-adenosyl-L-homocysteine + H(+). Its function is as follows. Catalyzes the 2 serial methylation steps for the conversion of the 7-monomethylguanosine (m(7)G) caps of snRNAs and snoRNAs to a 2,2,7-trimethylguanosine (m(2,2,7)G) cap structure. The enzyme is specific for guanine, and N7 methylation must precede N2 methylation. Hypermethylation of the m7G cap of U snRNAs leads to their concentration in nuclear foci, their colocalization with coilin and the formation of canonical Cajal bodies (CBs). Plays a role in transcriptional regulation. This chain is Trimethylguanosine synthase (TGS1), found in Homo sapiens (Human).